Consider the following 760-residue polypeptide: Xaa-Pro dipeptidyl-peptidase (760 aa).

Residues Ser349, Asp469, and His499 each act as charge relay system in the active site.

This sequence belongs to the peptidase S15 family. As to quaternary structure, homodimer.

It is found in the cytoplasm. The catalysed reaction is Hydrolyzes Xaa-Pro-|- bonds to release unblocked, N-terminal dipeptides from substrates including Ala-Pro-|-p-nitroanilide and (sequentially) Tyr-Pro-|-Phe-Pro-|-Gly-Pro-|-Ile.. Functionally, removes N-terminal dipeptides sequentially from polypeptides having unsubstituted N-termini provided that the penultimate residue is proline. This chain is Xaa-Pro dipeptidyl-peptidase, found in Streptococcus pyogenes serotype M28 (strain MGAS6180).